The sequence spans 480 residues: Histone-lysine N-methyltransferase ASHR1 (480 aa).

One can recognise an SET domain in the interval arginine 11–isoleucine 248. Zn(2+)-binding residues include cysteine 56, cysteine 59, cysteine 68, cysteine 71, cysteine 77, cysteine 81, histidine 89, and cysteine 93. The MYND-type zinc finger occupies cysteine 56–cysteine 93.

It belongs to the class V-like SAM-binding methyltransferase superfamily. Histone-lysine methyltransferase family. SET2 subfamily.

It is found in the nucleus. Its subcellular location is the chromosome. The catalysed reaction is L-lysyl-[histone] + S-adenosyl-L-methionine = N(6)-methyl-L-lysyl-[histone] + S-adenosyl-L-homocysteine + H(+). In terms of biological role, histone methyltransferase. This chain is Histone-lysine N-methyltransferase ASHR1 (ASHR1), found in Arabidopsis thaliana (Mouse-ear cress).